The sequence spans 305 residues: tRNA-cytidine(32) 2-sulfurtransferase (305 aa).

A disordered region spans residues 1 to 20 (MTAVLPLPHPLADPAPRDPR). Positions 59–64 (SGGKDS) match the PP-loop motif motif. 3 residues coordinate [4Fe-4S] cluster: Cys-134, Cys-137, and Cys-225. Low complexity predominate over residues 282-293 (DAPPDLAPDPGA). A disordered region spans residues 282-305 (DAPPDLAPDPGAWLTASDATHDSD).

This sequence belongs to the TtcA family. Homodimer. The cofactor is Mg(2+). Requires [4Fe-4S] cluster as cofactor.

Its subcellular location is the cytoplasm. It carries out the reaction cytidine(32) in tRNA + S-sulfanyl-L-cysteinyl-[cysteine desulfurase] + AH2 + ATP = 2-thiocytidine(32) in tRNA + L-cysteinyl-[cysteine desulfurase] + A + AMP + diphosphate + H(+). It functions in the pathway tRNA modification. Its function is as follows. Catalyzes the ATP-dependent 2-thiolation of cytidine in position 32 of tRNA, to form 2-thiocytidine (s(2)C32). The sulfur atoms are provided by the cysteine/cysteine desulfurase (IscS) system. The polypeptide is tRNA-cytidine(32) 2-sulfurtransferase (Xanthomonas oryzae pv. oryzae (strain MAFF 311018)).